Here is a 126-residue protein sequence, read N- to C-terminus: MHHRKSGRHLNRTSAHRKAMLRNMAVSLFQHELIKTTLPKAKELRRVVEPLITLAKEDTVANRRLAFNRLRDDAIVTKLFKEIAPRHKERPGGYCRVLKYGFRNGDSAPMAIVELVDREESESSED.

Belongs to the bacterial ribosomal protein bL17 family. In terms of assembly, part of the 50S ribosomal subunit. Contacts protein L32.

The protein is Large ribosomal subunit protein bL17 of Coxiella burnetii (strain CbuK_Q154) (Coxiella burnetii (strain Q154)).